The chain runs to 122 residues: Elsinochromes biosynthesis cluster protein HP4 (122 aa).

Its function is as follows. Part of the gene cluster that mediates the biosynthesis of elsinochromes, pigments consisting of at least four interconvertible tautomers (A, B, C and D) that have a core phenolic quinone to which various side chains are attached and which play an important role in fungal pathogenesis. The non-reducing polyketide synthase PKS1 was proposed to iteratively catalyze decarboxylation between acetyl-CoA and malonyl-CoA subunits for polyketide chain elongation. The released polyketide undergoes cyclization to form an aromatic ring, and proceeds via serial modification steps to produce the heptaketide back- bone of elsinochrome. As elsinochrome has a symmetrical structure, two identical heptaketides are fused to form a core 1,2-dihydrobenzo-perylene ring structure, which can then be successively modified to produce the various derivatives of elsinochrome. Some of these reactions may be cooperatively carried out, at least in part, by the products of RDT1, OXR1 and PKS1. PRF1, embedded within the elsinochrome cluster possibly functions to stabilize some of the biosynthetic enzymes required for elsinochrome production. As prefoldin is a hexamer containing 2 a and 4 b subunits, additional prefoldin subunits, whose coding genes may not immediately link to the elsinochrome biosynthetic gene cluster, are required to fulfill the chaperone function. In addition, no methyltransferase-coding gene exists within the biosynthetic gene cluster, even though elsinochrome has four methyl groups at positions C3, C7, C8 and C12. Apparently, the identified gene cluster does not contain the entire entourage of genes responsible for elsinochrome biosynthesis. Once elsinochrome is synthesized, it must be exported outside the fungal cells, which is probably accomplished by the ECT1 transporter, to avoid toxicity. The chain is Elsinochromes biosynthesis cluster protein HP4 from Elsinoe fawcettii (Citrus scab fungus).